The following is a 218-amino-acid chain: Adenylate kinase (218 aa).

Residue 12 to 17 participates in ATP binding; sequence GAGKGT. An NMP region spans residues 32-61; that stretch reads STGDIFRKNISENTPLGIEAKSYMDNGQLV. AMP is bound by residues Thr33, Arg38, 59-61, 87-90, and Gln94; these read QLV and GFPR. Residues 128 to 165 are LID; it reads GRRVCPSCGASYHIKFNPPTNDGKCDLCGSDVIQRKDD. Arg129 is an ATP binding site. 2 residues coordinate Zn(2+): Cys132 and Cys135. ATP is bound at residue 138–139; sequence SY. 2 residues coordinate Zn(2+): Cys152 and Cys155. 2 residues coordinate AMP: Arg162 and Arg173. Gln201 is an ATP binding site.

The protein belongs to the adenylate kinase family. Monomer.

The protein resides in the cytoplasm. The catalysed reaction is AMP + ATP = 2 ADP. It participates in purine metabolism; AMP biosynthesis via salvage pathway; AMP from ADP: step 1/1. Its function is as follows. Catalyzes the reversible transfer of the terminal phosphate group between ATP and AMP. Plays an important role in cellular energy homeostasis and in adenine nucleotide metabolism. The polypeptide is Adenylate kinase (Clostridium perfringens (strain 13 / Type A)).